Reading from the N-terminus, the 185-residue chain is CASP-like protein 5A1 (185 aa).

Over 1–48 (MNVSHPAVHPVGVPPALGGQAVPPRMRMRVRMEYLVFQGMPLPGSLGG) the chain is Cytoplasmic. Residues 49–69 (LMLRLGQFCSALIAFSVMVSI) traverse the membrane as a helical segment. Residues 70-76 (RDFSVTA) are Extracellular-facing. Residues 77–97 (FCYLLAATVLQCLWSLALAVI) form a helical membrane-spanning segment. At 98–121 (DVYALLVKRSLRNPLLVSIFVVGD) the chain is on the cytoplasmic side. The chain crosses the membrane as a helical span at residues 122–142 (GVTATLTFAAACASAGVVVLI). Over 143 to 160 (GNDISMCKSNPCANYEAA) the chain is Extracellular. The chain crosses the membrane as a helical span at residues 161–181 (IIMAFLSWFMVSISFVLTFWM). At 182-185 (LATL) the chain is on the cytoplasmic side.

The protein belongs to the Casparian strip membrane proteins (CASP) family. As to quaternary structure, homodimer and heterodimers.

The protein resides in the cell membrane. In Pinus contorta (Shore pine), this protein is CASP-like protein 5A1.